The primary structure comprises 370 residues: Chloromuconate cycloisomerase (370 aa).

Lys-165 serves as the catalytic Proton acceptor. Residues Asp-194, Glu-220, and Asp-245 each coordinate Mn(2+). Residue Glu-323 is the Proton donor of the active site.

This sequence belongs to the mandelate racemase/muconate lactonizing enzyme family. Mn(2+) serves as cofactor.

The catalysed reaction is 2-[(2R)-2-chloro-2,5-dihydro-5-oxofuryl]acetate = 3-chloro-cis,cis-muconate + H(+). It participates in aromatic compound metabolism; 3-chlorocatechol degradation. The sequence is that of Chloromuconate cycloisomerase (tfdD) from Delftia acidovorans (Pseudomonas acidovorans).